Here is a 189-residue protein sequence, read N- to C-terminus: ATP synthase subunit b (189 aa).

The helical transmembrane segment at 35 to 54 threads the bilayer; the sequence is LLAQMFNFLVLLILLRAVAY.

The protein belongs to the ATPase B chain family. As to quaternary structure, F-type ATPases have 2 components, F(1) - the catalytic core - and F(0) - the membrane proton channel. F(1) has five subunits: alpha(3), beta(3), gamma(1), delta(1), epsilon(1). F(0) has three main subunits: a(1), b(2) and c(10-14). The alpha and beta chains form an alternating ring which encloses part of the gamma chain. F(1) is attached to F(0) by a central stalk formed by the gamma and epsilon chains, while a peripheral stalk is formed by the delta and b chains.

It localises to the cell membrane. Its function is as follows. F(1)F(0) ATP synthase produces ATP from ADP in the presence of a proton or sodium gradient. F-type ATPases consist of two structural domains, F(1) containing the extramembraneous catalytic core and F(0) containing the membrane proton channel, linked together by a central stalk and a peripheral stalk. During catalysis, ATP synthesis in the catalytic domain of F(1) is coupled via a rotary mechanism of the central stalk subunits to proton translocation. In terms of biological role, component of the F(0) channel, it forms part of the peripheral stalk, linking F(1) to F(0). The protein is ATP synthase subunit b of Desulforamulus reducens (strain ATCC BAA-1160 / DSM 100696 / MI-1) (Desulfotomaculum reducens).